The chain runs to 192 residues: Fe/S biogenesis protein NfuA (192 aa).

The [4Fe-4S] cluster site is built by Cys-149 and Cys-152.

This sequence belongs to the NfuA family. Homodimer. [4Fe-4S] cluster is required as a cofactor.

In terms of biological role, involved in iron-sulfur cluster biogenesis. Binds a 4Fe-4S cluster, can transfer this cluster to apoproteins, and thereby intervenes in the maturation of Fe/S proteins. Could also act as a scaffold/chaperone for damaged Fe/S proteins. This Shewanella putrefaciens (strain CN-32 / ATCC BAA-453) protein is Fe/S biogenesis protein NfuA.